Consider the following 235-residue polypeptide: MNKRVLVKFSGEALAGAEGYGIDTKILDYIAEEIKSLVENGIEVAIVIGGGNIIRGVTAAADGVIKRTSADYMGMLGTVINGVAMQEALEYKGLSARLQTAIKMEQIAEPFIVRKAMRHFEKGRVVIFGAGTGNPYFTTDTGATLRATEIGASMLIKATKVNGVYDKDPMKYPDAQKLETLSYDRALEDQIKVMDDTAIALAKDNKLPIAVTNMNEKGNLLRIVKGDYSKCSIVK.

Lys-8–Gly-11 provides a ligand contact to ATP. The segment at Gly-16–Gly-21 is involved in allosteric activation by GTP. Gly-50 is a binding site for UMP. The ATP site is built by Gly-51 and Arg-55. Residues Asp-71 and Thr-132–Thr-139 each bind UMP. Thr-159, Tyr-165, and Asp-168 together coordinate ATP.

This sequence belongs to the UMP kinase family. As to quaternary structure, homohexamer.

Its subcellular location is the cytoplasm. It carries out the reaction UMP + ATP = UDP + ADP. It functions in the pathway pyrimidine metabolism; CTP biosynthesis via de novo pathway; UDP from UMP (UMPK route): step 1/1. Its activity is regulated as follows. Allosterically activated by GTP. Inhibited by UTP. Catalyzes the reversible phosphorylation of UMP to UDP. In Aliarcobacter butzleri (strain RM4018) (Arcobacter butzleri), this protein is Uridylate kinase.